Reading from the N-terminus, the 425-residue chain is MSDQDNTQTSSSKLAPHHNIFMANLESSPTKDRNTSSQNASSSRVIESLHDQIDMLTKTNLQLTTQSQNLLSKLELAQSKESKLLENLNLLKNENENLNSIFERKNKKLKELEKDYSELSNRYNEQKEKMDQLSKLAKNSSAIEQSCSEKLQNMEVNYNSLLESQNLYRDHYSDEISKLNEKIGLLELELSNQNLNYGSDTSSNSDIELNLNKFNDSVKDLKSLETEKDSKLSKIITHSLDELNLQSWLNLYQTNENLISTFAEKMDLKDVLKRNDEKISNKGAVVQTLKKNVQTQVESNNADALSSNNAQDMLPIKMVKLRKTPNTNDSSSNGNSSNNKRRSFYTASPLLSSGSIPKSASPVLPGVKRTASVRKPSSSSSKTNVTHNNDPSTSPTISVPPGVTRTVSSTHKKKGNSMVVHGAQS.

Residues 24-45 are disordered; that stretch reads NLESSPTKDRNTSSQNASSSRV. The span at 35 to 45 shows a compositional bias: polar residues; sequence TSSQNASSSRV. Positions 68–197 form a coiled coil; sequence QNLLSKLELA…LELSNQNLNY (130 aa). The disordered stretch occupies residues 322-425; that stretch reads RKTPNTNDSS…NSMVVHGAQS (104 aa). Residues 326-338 are compositionally biased toward low complexity; the sequence is NTNDSSSNGNSSN. Residue S343 is modified to Phosphoserine. Composition is skewed to polar residues over residues 345–358 and 382–397; these read YTAS…SIPK and KTNV…SPTI. Position 394 is a phosphoserine (S394).

The protein belongs to the SHE3 family. Interacts with SHE2 and MYO4.

The protein resides in the endoplasmic reticulum membrane. RNA-binding protein that binds specific mRNAs including the ASH1 mRNA, coding for a repressor of the HO endonuclease. Part of the mRNA localization machinery that restricts accumulation of certain proteins to the bud and in the daughter cell. Required for the delivery of cortical endoplasmic reticulum into the emerging bud. This is SWI5-dependent HO expression protein 3 (SHE3) from Saccharomyces cerevisiae (strain ATCC 204508 / S288c) (Baker's yeast).